The primary structure comprises 268 residues: tRNA pseudouridine synthase A (268 aa).

The active-site Nucleophile is the Asp52. Residue Tyr113 coordinates substrate.

This sequence belongs to the tRNA pseudouridine synthase TruA family. Homodimer.

The enzyme catalyses uridine(38/39/40) in tRNA = pseudouridine(38/39/40) in tRNA. Functionally, formation of pseudouridine at positions 38, 39 and 40 in the anticodon stem and loop of transfer RNAs. The chain is tRNA pseudouridine synthase A from Chlamydia abortus (strain DSM 27085 / S26/3) (Chlamydophila abortus).